A 927-amino-acid chain; its full sequence is F-box only protein 11 (927 aa).

The interval methionine 1–histidine 132 is disordered. A compositionally biased stretch (basic residues) spans alanine 7–arginine 16. The span at proline 17 to proline 27 shows a compositional bias: low complexity. A compositionally biased stretch (pro residues) spans proline 28–proline 68. The span at proline 114 to asparagine 129 shows a compositional bias: polar residues. The 47-residue stretch at glutamine 153–leucine 199 folds into the F-box domain. 19 PbH1 repeats span residues glycine 395 to aspartate 417, histidine 418 to asparagine 440, histidine 441 to aspartate 463, histidine 464 to alanine 486, tyrosine 487 to glutamate 509, lysine 510 to serine 532, asparagine 533 to glycine 555, aspartate 556 to threonine 578, asparagine 579 to glutamate 601, lysine 602 to threonine 624, glycine 625 to aspartate 647, asparagine 648 to threonine 670, glycine 671 to asparagine 693, serine 694 to threonine 716, aspartate 717 to asparagine 739, glycine 740 to threonine 762, asparagine 763 to asparagine 785, histidine 786 to serine 808, and glycine 809 to valine 830. A UBR-type zinc finger spans residues glycine 833–glutamate 904.

Component of the SCF(FBXO11) complex consisting of CUL1, RBX1, SKP1 and FBXO11. Interacts with CIITA. In terms of tissue distribution, isoform 5 is expressed in keratinocytes, fibroblasts and melanocytes.

Its subcellular location is the nucleus. The protein localises to the chromosome. The protein operates within protein modification; protein ubiquitination. In terms of biological role, substrate recognition component of a SCF (SKP1-CUL1-F-box protein) E3 ubiquitin-protein ligase complex which mediates the ubiquitination and subsequent proteasomal degradation of target proteins, such as DTL/CDT2, BCL6, SNAI1 and PRDM1/BLIMP1. The SCF(FBXO11) complex mediates ubiquitination and degradation of BCL6, thereby playing a role in the germinal center B-cells terminal differentiation toward memory B-cells and plasma cells. The SCF(FBXO11) complex also mediates ubiquitination and degradation of DTL, an important step for the regulation of TGF-beta signaling, cell migration and the timing of the cell-cycle progression and exit. The SCF(FBXO11) complex also catalyzes ubiquitination and degradation of GSK3B-phosphorylated SNAI1. Binds to and neddylates phosphorylated p53/TP53, inhibiting its transcriptional activity. Plays a role in the regulatiom of erythropoiesis but not myelopoiesis or megakaryopoiesis. Mechanistically, activates erythroid genes by mediating the degradation of BAHD1, a heterochromatin-associated protein that recruits corepressors to H3K27me3 marks. Participates in macrophage cell death and inflammation in response to bacterial toxins by regulating the expression of complement 5a receptor 1/C5AR1 and IL-1beta. Acts as a critical regulator to determine the level of MHC-II by mediating the recognition of degron at the P/S/T domain of CIITA leading to its ubiquitination and subsequent degradation via the proteasome. Participates in the antiviral repsonse by initiating the activation of TBK1-IRF3-IFN-I axis. Mediates the 'Lys-63'-linked ubiquitination of TRAF3 to strengthen the interaction between TRAF3 and TBK1. This chain is F-box only protein 11, found in Homo sapiens (Human).